The chain runs to 248 residues: Triosephosphate isomerase (248 aa).

9-11 (NWK) is a binding site for substrate. Catalysis depends on His94, which acts as the Electrophile. The Proton acceptor role is filled by Glu166. Residues Gly172, Ser212, and 233-234 (GG) contribute to the substrate site.

The protein belongs to the triosephosphate isomerase family. In terms of assembly, homodimer.

The protein resides in the cytoplasm. The enzyme catalyses D-glyceraldehyde 3-phosphate = dihydroxyacetone phosphate. It participates in carbohydrate biosynthesis; gluconeogenesis. Its pathway is carbohydrate degradation; glycolysis; D-glyceraldehyde 3-phosphate from glycerone phosphate: step 1/1. Its function is as follows. Involved in the gluconeogenesis. Catalyzes stereospecifically the conversion of dihydroxyacetone phosphate (DHAP) to D-glyceraldehyde-3-phosphate (G3P). This Thermoanaerobacter sp. (strain X514) protein is Triosephosphate isomerase.